Here is a 184-residue protein sequence, read N- to C-terminus: GTP-binding protein Rheb (184 aa).

Residue lysine 8 forms a Glycyl lysine isopeptide (Lys-Gly) (interchain with G-Cter in ubiquitin) linkage. Positions 16, 17, 18, 19, 20, 21, 32, and 33 each coordinate GDP. The GTP site is built by serine 16, valine 17, glycine 18, lysine 19, serine 20, serine 21, valine 32, aspartate 33, tyrosine 35, proline 37, threonine 38, glycine 63, asparagine 119, lysine 120, and aspartate 122. Serine 20 contacts Mg(2+). Positions 35–43 (YDPTIENTF) match the Effector region motif. Threonine 38 is a Mg(2+) binding site. Asparagine 119 lines the GDP pocket. Aspartate 122 contacts GDP. Residue serine 130 is modified to Phosphoserine; by MAPKAPK5. Alanine 150 lines the GDP pocket. Alanine 150 is a binding site for GTP. A Cysteine methyl ester modification is found at cysteine 181. Residue cysteine 181 is the site of S-farnesyl cysteine attachment. The propeptide at 182–184 (SVM) is removed in mature form.

Belongs to the small GTPase superfamily. Rheb family. In terms of assembly, associates with the mTORC1 complex (MTOR, MLST8 and RPTOR) in a guanyl nucleotide-independent manner. Interacts with TSC2. Interacts with MCRS1; the interaction maintains RHEB at the lysosome in its active GTP-bound form and prevents its interaction with the mTORC1 complex inhibitor TSC2, ensuring activation of the mTORC1 complex by RHEB. Interacts (when prenylated) with PDE6D; this promotes release from membranes. Post-translationally, farnesylation is important for efficiently activating mTORC1-mediated signaling. Polyubiquitinated in response to amino acid, promoting its interaction with MTOR and mTORC1 activation. Deubiquitination by ATXN3 promotes recruitment of the TSC-TBC complex and RHEB inactivation by TSC2. Monoubiquitinated at Lys-8 by RNF152, promoting its association with the TSC-TBC complex. Deubiquitinated at Lys-8 by USP4, promoting mTORC1 activation. In terms of processing, phosphorylation by MAPKAPK5 impairs GTP-binding and inactivation.

Its subcellular location is the endomembrane system. The protein resides in the lysosome membrane. The protein localises to the golgi apparatus membrane. It is found in the endoplasmic reticulum membrane. It localises to the cytoplasm. Its subcellular location is the cytosol. The enzyme catalyses GTP + H2O = GDP + phosphate + H(+). With respect to regulation, alternates between an inactive form bound to GDP and an active form bound to GTP. Inactivated by the TSC-TBC complex via the GTPase activating protein (GAP) domain of TSC2. Autoinhibited by Tyr-35, which constrains the active site conformation, restricting the access of the catalytic Asp-65 to the nucleotide-binding pocket. Small GTPase that acts as an allosteric activator of the canonical mTORC1 complex, an evolutionarily conserved central nutrient sensor that stimulates anabolic reactions and macromolecule biosynthesis to promote cellular biomass generation and growth. In response to nutrients, growth factors or amino acids, specifically activates the protein kinase activity of MTOR, the catalytic component of the mTORC1 complex: acts by causing a conformational change that allows the alignment of residues in the active site of MTOR, thereby enhancing the phosphorylation of ribosomal protein S6 kinase (RPS6KB1 and RPS6KB2) and EIF4EBP1 (4E-BP1). RHEB is also required for localization of the TSC-TBC complex to lysosomal membranes. In response to starvation, RHEB is inactivated by the TSC-TBC complex, preventing activation of mTORC1. Has low intrinsic GTPase activity. The protein is GTP-binding protein Rheb of Mus musculus (Mouse).